A 623-amino-acid chain; its full sequence is UvrABC system protein C (623 aa).

Residues 12-91 enclose the GIY-YIG domain; the sequence is PSPGVYLMKS…IKQHRPKYNI (80 aa). The UVR domain maps to 201–236; that stretch reads TEVARLYRSKMNLAAEQMRYEDAARYRDLLRAIEVT. A disordered region spans residues 603–623; the sequence is RLHGSPLPNPPPPGEGAMDRK.

It belongs to the UvrC family. As to quaternary structure, interacts with UvrB in an incision complex.

Its subcellular location is the cytoplasm. Its function is as follows. The UvrABC repair system catalyzes the recognition and processing of DNA lesions. UvrC both incises the 5' and 3' sides of the lesion. The N-terminal half is responsible for the 3' incision and the C-terminal half is responsible for the 5' incision. This is UvrABC system protein C from Citrifermentans bemidjiense (strain ATCC BAA-1014 / DSM 16622 / JCM 12645 / Bem) (Geobacter bemidjiensis).